A 259-amino-acid chain; its full sequence is Ribosomal RNA small subunit methyltransferase A (259 aa).

Residues asparagine 15, leucine 17, glycine 41, glutamate 62, aspartate 86, and asparagine 105 each coordinate S-adenosyl-L-methionine.

Belongs to the class I-like SAM-binding methyltransferase superfamily. rRNA adenine N(6)-methyltransferase family. RsmA subfamily.

It is found in the cytoplasm. The catalysed reaction is adenosine(1518)/adenosine(1519) in 16S rRNA + 4 S-adenosyl-L-methionine = N(6)-dimethyladenosine(1518)/N(6)-dimethyladenosine(1519) in 16S rRNA + 4 S-adenosyl-L-homocysteine + 4 H(+). Functionally, specifically dimethylates two adjacent adenosines (A1518 and A1519) in the loop of a conserved hairpin near the 3'-end of 16S rRNA in the 30S particle. May play a critical role in biogenesis of 30S subunits. The chain is Ribosomal RNA small subunit methyltransferase A from Mycoplasmopsis synoviae (strain 53) (Mycoplasma synoviae).